The primary structure comprises 293 residues: UDP-N-acetylglucosamine transferase subunit ALG13 (293 aa).

It belongs to the glycosyltransferase 28 family. In terms of assembly, heterodimer with ALG14 to form a functional enzyme.

The protein localises to the endoplasmic reticulum. The catalysed reaction is an N-acetyl-alpha-D-glucosaminyl-diphospho-di-trans,poly-cis-dolichol + UDP-N-acetyl-alpha-D-glucosamine = an N,N'-diacetylchitobiosyl-diphospho-di-trans,poly-cis-dolichol + UDP + H(+). Its function is as follows. Involved in protein N-glycosylation. Essential for the second step of the dolichol-linked oligosaccharide pathway. The sequence is that of UDP-N-acetylglucosamine transferase subunit ALG13 (ALG13) from Candida albicans (strain SC5314 / ATCC MYA-2876) (Yeast).